Consider the following 280-residue polypeptide: MVSSYFTFPQIDPIIFSIGPLSLRWYGLMYLVGFAAAFWLAGVRLSRTNWTKEQLSDLLFWGFLGVILGGRIGYVLFYQFELFLSDPLYLFKIWTGGMSFHGGLLGVIAALWWFSRKAKCTFLQVGDFIAPLVPIGLGAGRIGNFINAELWGRTTDVSWGVIFPGAGPLPRHPSQLYEFALEGVVLFLILWLYSRKPRPIGAVSGLFLLGYGSFRFFVEFFREPDQHIGLYEGAFSLGISQGQILSAPMIIGGIALMVWAVRRNKMAETGVPKSSKAAKA.

4 helical membrane passes run 23-43 (LRWY…LAGV), 58-78 (LLFW…VLFY), 93-113 (IWTG…ALWW), and 120-140 (CTFL…LGAG). An a 1,2-diacyl-sn-glycero-3-phospho-(1'-sn-glycerol)-binding site is contributed by Arg141. 3 consecutive transmembrane segments (helical) span residues 173-193 (PSQL…LWLY), 200-220 (IGAV…FVEF), and 241-261 (QGQI…VWAV).

It belongs to the Lgt family.

The protein localises to the cell inner membrane. The catalysed reaction is L-cysteinyl-[prolipoprotein] + a 1,2-diacyl-sn-glycero-3-phospho-(1'-sn-glycerol) = an S-1,2-diacyl-sn-glyceryl-L-cysteinyl-[prolipoprotein] + sn-glycerol 1-phosphate + H(+). Its pathway is protein modification; lipoprotein biosynthesis (diacylglyceryl transfer). Catalyzes the transfer of the diacylglyceryl group from phosphatidylglycerol to the sulfhydryl group of the N-terminal cysteine of a prolipoprotein, the first step in the formation of mature lipoproteins. The polypeptide is Phosphatidylglycerol--prolipoprotein diacylglyceryl transferase (Pseudoalteromonas atlantica (strain T6c / ATCC BAA-1087)).